We begin with the raw amino-acid sequence, 317 residues long: GTPase Era (317 aa).

The 174-residue stretch at 17-190 folds into the Era-type G domain; that stretch reads RAGFACFVGR…ADLLTPLLPE (174 aa). The interval 25-32 is G1; sequence GRPNAGKS. 25-32 serves as a coordination point for GTP; sequence GRPNAGKS. The interval 51–55 is G2; it reads QTTRH. Positions 72 to 75 are G3; it reads DTPG. GTP-binding positions include 72 to 76 and 135 to 138; these read DTPGL and TKTD. Residues 135–138 are G4; it reads TKTD. The G5 stretch occupies residues 169–171; the sequence is VSA. Residues 221-303 enclose the KH type-2 domain; it reads VRDELPHSIA…FLDLHVKVAK (83 aa).

It belongs to the TRAFAC class TrmE-Era-EngA-EngB-Septin-like GTPase superfamily. Era GTPase family. In terms of assembly, monomer.

The protein localises to the cytoplasm. The protein resides in the cell membrane. Functionally, an essential GTPase that binds both GDP and GTP, with rapid nucleotide exchange. Plays a role in 16S rRNA processing and 30S ribosomal subunit biogenesis and possibly also in cell cycle regulation and energy metabolism. This Streptomyces coelicolor (strain ATCC BAA-471 / A3(2) / M145) protein is GTPase Era.